We begin with the raw amino-acid sequence, 429 residues long: Glutamate--tRNA ligase 1 (429 aa).

The short motif at 6–16 (PSPTGDMHIGN) is the 'HIGH' region element. A 'KMSKS' region motif is present at residues 235 to 239 (KMSKR). Lys-238 contacts ATP.

The protein belongs to the class-I aminoacyl-tRNA synthetase family. Glutamate--tRNA ligase type 1 subfamily. In terms of assembly, monomer.

Its subcellular location is the cytoplasm. It carries out the reaction tRNA(Glu) + L-glutamate + ATP = L-glutamyl-tRNA(Glu) + AMP + diphosphate. In terms of biological role, catalyzes the attachment of glutamate to tRNA(Glu) in a two-step reaction: glutamate is first activated by ATP to form Glu-AMP and then transferred to the acceptor end of tRNA(Glu). This chain is Glutamate--tRNA ligase 1, found in Campylobacter fetus subsp. fetus (strain 82-40).